The sequence spans 155 residues: Small ribosomal subunit protein uS7 (155 aa).

This sequence belongs to the universal ribosomal protein uS7 family. Part of the 30S ribosomal subunit. Contacts proteins S9 and S11.

Its function is as follows. One of the primary rRNA binding proteins, it binds directly to 16S rRNA where it nucleates assembly of the head domain of the 30S subunit. Is located at the subunit interface close to the decoding center, probably blocks exit of the E-site tRNA. In Mycoplasma genitalium (strain ATCC 33530 / DSM 19775 / NCTC 10195 / G37) (Mycoplasmoides genitalium), this protein is Small ribosomal subunit protein uS7.